The primary structure comprises 686 residues: Pentatricopeptide repeat-containing protein 1, mitochondrial (686 aa).

A compositionally biased stretch (polar residues) spans 55-67 (RMSSLCSDSSTPV). A disordered region spans residues 55 to 79 (RMSSLCSDSSTPVAPQEEEEEESFG). PPR repeat units lie at residues 124–160 (TPYW…RLQP), 161–195 (LECN…DLEP), 196–234 (SDAT…NFQL), 235–269 (NLKT…GHAV), and 270–306 (TEET…GIKP). A disordered region spans residues 383-407 (KLEGPPAFPEARETSRTQPEVETKA). Residues 392 to 407 (EARETSRTQPEVETKA) are compositionally biased toward basic and acidic residues. PPR repeat units lie at residues 508–542 (DITF…GIVP) and 575–609 (NTHI…SVPV).

It belongs to the PTCD1 family. Associates with mitochondrial leucine tRNAs. Interacts with ELAC2.

It is found in the mitochondrion matrix. Mitochondrial protein implicated in negative regulation of leucine tRNA levels, as well as negative regulation of mitochondria-encoded proteins and COX activity. Also affects the 3'-processing of mitochondrial tRNAs. This chain is Pentatricopeptide repeat-containing protein 1, mitochondrial (Ptcd1), found in Rattus norvegicus (Rat).